A 923-amino-acid polypeptide reads, in one-letter code: Rap guanine nucleotide exchange factor 3 (923 aa).

Serine 79 carries the post-translational modification Phosphoserine. Residues 110 to 186 (ATCPNLIRDR…RDAQFYRFPG (77 aa)) form the DEP domain. Residues 218–242 (TVALRKPPGQRTDEELDLIFEELLH) are interaction with PDE3B. Residues 311–314 (GQLA) and 321–322 (RA) contribute to the 3',5'-cyclic AMP site. One can recognise an N-terminal Ras-GEF domain in the interval 384–518 (NRYTVMSGTP…EQWPERRRCH (135 aa)). The interaction with PDE3B stretch occupies residues 398 to 422 (ELLLEAMGPDSSAHDPTETFLSDFL). Serine 528 and serine 864 each carry phosphoserine. Residues 662-889 (SAKDLAGQLT…ARISTCSEQS (228 aa)) enclose the Ras-GEF domain.

As to quaternary structure, interacts with PDE3B and PIK3R6; form a signaling complex that regulates phosphatidylinositol 3-kinase gamma in angiogenesis. Widely expressed with highest levels in adult kidney, heart, thyroid and brain, and fetal kidney.

It localises to the endomembrane system. Guanine nucleotide exchange factor (GEF) for RAP1A and RAP2A small GTPases that is activated by binding cAMP. Through simultaneous binding of PDE3B to RAPGEF3 and PIK3R6 is assembled in a signaling complex in which it activates the PI3K gamma complex and which is involved in angiogenesis. Plays a role in the modulation of the cAMP-induced dynamic control of endothelial barrier function through a pathway that is independent on Rho-mediated signaling. Required for the actin rearrangement at cell-cell junctions, such as stress fibers and junctional actin. The protein is Rap guanine nucleotide exchange factor 3 (RAPGEF3) of Homo sapiens (Human).